The following is a 164-amino-acid chain: Phosphopantetheine adenylyltransferase (164 aa).

Residue threonine 14 coordinates substrate. ATP-binding positions include 14–15 (TF) and histidine 22. Lysine 46, methionine 78, and arginine 92 together coordinate substrate. ATP contacts are provided by residues 93 to 95 (GLR), glutamate 103, and 128 to 134 (HAFISST).

The protein belongs to the bacterial CoaD family. Homohexamer. Mg(2+) is required as a cofactor.

Its subcellular location is the cytoplasm. The enzyme catalyses (R)-4'-phosphopantetheine + ATP + H(+) = 3'-dephospho-CoA + diphosphate. It functions in the pathway cofactor biosynthesis; coenzyme A biosynthesis; CoA from (R)-pantothenate: step 4/5. Reversibly transfers an adenylyl group from ATP to 4'-phosphopantetheine, yielding dephospho-CoA (dPCoA) and pyrophosphate. The chain is Phosphopantetheine adenylyltransferase from Vibrio vulnificus (strain CMCP6).